The sequence spans 643 residues: 1-deoxy-D-xylulose-5-phosphate synthase (643 aa).

Thiamine diphosphate contacts are provided by residues His-78 and 119–121 (AHS). Asp-150 contacts Mg(2+). Thiamine diphosphate contacts are provided by residues 151 to 152 (GA), Asn-179, Tyr-288, and Glu-370. Asn-179 serves as a coordination point for Mg(2+).

Belongs to the transketolase family. DXPS subfamily. In terms of assembly, homodimer. Requires Mg(2+) as cofactor. Thiamine diphosphate serves as cofactor.

It carries out the reaction D-glyceraldehyde 3-phosphate + pyruvate + H(+) = 1-deoxy-D-xylulose 5-phosphate + CO2. Its pathway is metabolic intermediate biosynthesis; 1-deoxy-D-xylulose 5-phosphate biosynthesis; 1-deoxy-D-xylulose 5-phosphate from D-glyceraldehyde 3-phosphate and pyruvate: step 1/1. Catalyzes the acyloin condensation reaction between C atoms 2 and 3 of pyruvate and glyceraldehyde 3-phosphate to yield 1-deoxy-D-xylulose-5-phosphate (DXP). This Xanthobacter autotrophicus (strain ATCC BAA-1158 / Py2) protein is 1-deoxy-D-xylulose-5-phosphate synthase.